A 112-amino-acid polypeptide reads, in one-letter code: MAESFTTTNRYFDNKHYPRGFSRHGDFTIKEAQLLERHGHAFNDLDLGKREPVTEEEKLFVAVCRGEREPVTDAERVWSKYMTRIKRPKRFHTLSGGKPQVEGAEDYTEADD.

The tract at residues 91–112 (FHTLSGGKPQVEGAEDYTEADD) is disordered. A compositionally biased stretch (acidic residues) spans 103 to 112 (GAEDYTEADD).

It belongs to the MaoP family.

In terms of biological role, involved in the organization of the Ori region of the chromosome into a macrodomain (MD). It constrains DNA mobility in the Ori macrodomain and limits long-distance DNA interactions with other chromosomal regions. This chain is Macrodomain Ori protein, found in Salmonella choleraesuis (strain SC-B67).